The following is a 1609-amino-acid chain: Probable cation-transporting ATPase I (1609 aa).

10 helical membrane passes run 30 to 50 (GAVNTMQMLASPVAEFAWPVV), 176 to 196 (LAILMPLTAAVMDLVALSAAV), 238 to 258 (IALSITTAAASGLTQAVGTPL), 357 to 377 (LIAAASALLAGGGTEDAAGAI), 641 to 661 (VHLAQGGTTLAGLLLITASAG), 673 to 693 (WFSPVNAAAATALVTGVVSAS), 778 to 798 (ILAVGAAASAIVGSNIDALLV), 921 to 941 (LFEGSAIVAGHARAIVVATGV), 969 to 989 (TSKVLPLTLAGGAAVTGLALL), and 997 to 1017 (AVADGVAIAVAAVPEGLPLVA). The 4-aspartylphosphate intermediate role is filled by D1053. D1335 and D1339 together coordinate Mg(2+). 2 helical membrane passes run 1396-1416 (ILVGGNVGEVVFTIIGTVFGA) and 1426-1446 (LLLVNLLTDMFPALSIAVTSQ). Residues 1447–1476 (YEEPGEDEYQTDEEADEARRTHQHEVLTGP) are disordered. Positions 1449 to 1462 (EPGEDEYQTDEEAD) are enriched in acidic residues. 2 consecutive transmembrane segments (helical) span residues 1542-1562 (VVATALGSAGVLIGIIQTPVI) and 1573-1593 (PIAWSGVITATAGATAVSVLA).

This sequence belongs to the cation transport ATPase (P-type) (TC 3.A.3) family.

The protein localises to the cell membrane. The catalysed reaction is ATP + H2O = ADP + phosphate + H(+). This is Probable cation-transporting ATPase I (ctpI) from Mycobacterium leprae (strain TN).